The following is a 160-amino-acid chain: Endoribonuclease YbeY (160 aa).

Zn(2+) is bound by residues H125, H129, and H135.

It belongs to the endoribonuclease YbeY family. It depends on Zn(2+) as a cofactor.

The protein resides in the cytoplasm. Its function is as follows. Single strand-specific metallo-endoribonuclease involved in late-stage 70S ribosome quality control and in maturation of the 3' terminus of the 16S rRNA. The chain is Endoribonuclease YbeY from Dehalococcoides mccartyi (strain ATCC BAA-2100 / JCM 16839 / KCTC 5957 / BAV1).